Here is a 392-residue protein sequence, read N- to C-terminus: Zinc transporter zipt-7.1 (392 aa).

Residue asparagine 63 is glycosylated (N-linked (GlcNAc...) asparagine). 2 consecutive transmembrane segments (helical) span residues 82–102 (VFSLSAVIGISLAPCTLLFFI) and 114–134 (ILLAFGAGGLLGDALLHIIPH). Residues 139 to 162 (HSHGAHDHDHAHSHDHAHNDHSHD) form a disordered region. Over residues 142 to 162 (GAHDHDHAHSHDHAHNDHSHD) the composition is skewed to basic and acidic residues. A helical membrane pass occupies residues 170–190 (GIYVIAGILVFMMVEQLVRII). N-linked (GlcNAc...) asparagine glycosylation occurs at asparagine 248. 3 consecutive transmembrane segments (helical) span residues 255–275 (IGASFSAGSTLGWVTTLTVLL), 304–324 (VTALGAITGCIFSLLISNPVL), and 331–351 (GAIMPFTAGGFIYIATVSVIP). N-linked (GlcNAc...) asparagine glycosylation is present at asparagine 361. Residues 371–391 (SLVHLIAICMGVGMMYIVSLV) form a helical membrane-spanning segment.

This sequence belongs to the ZIP transporter (TC 2.A.5) family. KE4/Catsup subfamily.

It is found in the membrane. In terms of biological role, zinc transporter which regulates intracellular zinc levels. Required for spermatogenesis in both hermaphrodites and males where it resides in an inactive form in immature sperm, spermatids, but is likely activated in response to reduced spe-4 and spe-6 function. Upon activation, mediates the release of zinc from internal stores in spermatids into the cytoplasm. The resulting increase in cytoplasmic zinc levels promotes spermatid activation and subsequent differentiation into mature motile sperm that are capable of fertilization. This is Zinc transporter zipt-7.1 from Caenorhabditis briggsae.